The sequence spans 267 residues: Cell division protein FtsQ (267 aa).

Residues 1 to 32 (MRKKTSSNKKKQTKKTNNISLRRKLRLIYKKA) lie on the Cytoplasmic side of the membrane. A helical membrane pass occupies residues 33-53 (ILGLKIALIIFVCLFVFTKYF). Topologically, residues 54–267 (AGIKTYLTTN…DKNKYYIEKY (214 aa)) are periplasmic. The region spanning 73-141 (FKLENVIIEG…NTVYIKLFER (69 aa)) is the POTRA domain.

The protein belongs to the FtsQ/DivIB family. FtsQ subfamily.

The protein resides in the cell inner membrane. Essential cell division protein. The polypeptide is Cell division protein FtsQ (Rickettsia felis (strain ATCC VR-1525 / URRWXCal2) (Rickettsia azadi)).